Consider the following 151-residue polypeptide: Protein INO4 (151 aa).

The region spanning glutamine 45–leucine 97 is the bHLH domain. Positions histidine 112–proline 137 are disordered. The segment covering threonine 116–asparagine 131 has biased composition (polar residues).

Efficient DNA binding requires dimerization with another bHLH protein.

It localises to the nucleus. Functionally, transcriptional activator of phospholipid synthetic genes (such as INO1, CHO1/PSS, CHO2/PEM1, OPI3/PEM2, etc.). This is Protein INO4 (INO4) from Saccharomyces cerevisiae (strain ATCC 204508 / S288c) (Baker's yeast).